We begin with the raw amino-acid sequence, 319 residues long: Multivesicular body subunit 12B (319 aa).

The tract at residues 1–50 is disordered; that stretch reads MRSCFCVRRSRDPPPPQPPPPPPQRGTDQSTMPEVKDLSEALPETSMDPI. Pro residues predominate over residues 13–24; sequence PPPPQPPPPPPQ. Phosphoserine is present on residues Ser-46 and Ser-101. In terms of domain architecture, MABP spans 47 to 193; the sequence is MDPITGVGVV…SMGIWYRMGR (147 aa). A phosphothreonine mark is found at Thr-122, Thr-204, and Thr-205. Positions 195–222 are disordered; that stretch reads PRNHDSSQPTTPSQSSAASTPAPNLPRH. Over residues 200-216 the composition is skewed to low complexity; the sequence is SSQPTTPSQSSAASTPA. Ser-224 is subject to Phosphoserine. Positions 254–303 constitute a UMA domain; the sequence is MDGVPFMISEKFSCVPESMQPFDLLGITIKSLAEIEKEYEYSFRTEQSAA. The disordered stretch occupies residues 299–319; sequence EQSAAARLPPSPTRCQQIPQS. Ser-309 is modified (phosphoserine).

It belongs to the MVB12 family. As to quaternary structure, component of the ESCRT-I complex (endosomal sorting complex required for transport I) which consists of TSG101, VPS28, a VPS37 protein (VPS37A to -D) and MVB12A or MVB12B in a 1:1:1:1 stoichiometry. Interacts with TSG101; the association appears to be mediated by the TSG101-VPS37 binary subcomplex. Interacts with VPS28. Interacts with VPS37B; the association appears to be mediated by the TSG101-VPS37 binary subcomplex. Interacts with VPS37C; the association appears to be mediated by the TSG101-VPS37 binary subcomplex.

It is found in the endosome. The protein localises to the late endosome membrane. Component of the ESCRT-I complex, a regulator of vesicular trafficking process. Required for the sorting of endocytic ubiquitinated cargos into multivesicular bodies. In Homo sapiens (Human), this protein is Multivesicular body subunit 12B (MVB12B).